Reading from the N-terminus, the 101-residue chain is NAD(P)H-quinone oxidoreductase subunit 4L, chloroplastic (101 aa).

3 helical membrane passes run 2–22 (LLEHVLVLSAYLFSIGIYGLI), 32–52 (MCLELILNAVNMNFVTFSDFF), and 61–81 (IFSIFVIAIAAAEAAIGSAIV).

This sequence belongs to the complex I subunit 4L family. As to quaternary structure, NDH is composed of at least 16 different subunits, 5 of which are encoded in the nucleus.

It localises to the plastid. Its subcellular location is the chloroplast thylakoid membrane. The enzyme catalyses a plastoquinone + NADH + (n+1) H(+)(in) = a plastoquinol + NAD(+) + n H(+)(out). It carries out the reaction a plastoquinone + NADPH + (n+1) H(+)(in) = a plastoquinol + NADP(+) + n H(+)(out). NDH shuttles electrons from NAD(P)H:plastoquinone, via FMN and iron-sulfur (Fe-S) centers, to quinones in the photosynthetic chain and possibly in a chloroplast respiratory chain. The immediate electron acceptor for the enzyme in this species is believed to be plastoquinone. Couples the redox reaction to proton translocation, and thus conserves the redox energy in a proton gradient. This is NAD(P)H-quinone oxidoreductase subunit 4L, chloroplastic from Carica papaya (Papaya).